A 718-amino-acid polypeptide reads, in one-letter code: Serine/threonine-protein kinase PAK 5 (718 aa).

Disordered stretches follow at residues 1-29, 96-119, 226-245, 264-296, and 339-371; these read MFGKKKKKIEISGPSNFEHRVHTGFDPQE, RSNSLRKESPPTPDQGAASRIQGH, SPLDYSFQLTPSRTAGTSRC, YDRRPKSSYLHQTSPQPAMRQRSKSGSGLQEPM, and VFSPPLSGSDTYPRGPTKLPQSQSKVGYSSSSH. In terms of domain architecture, CRIB spans 11–24; the sequence is ISGPSNFEHRVHTG. Residues 25-447 are linker; the sequence is FDPQEQKFTG…VVSPGDPREY (423 aa). Position 104 is a phosphoserine (serine 104). Position 107 is a phosphothreonine (threonine 107). Positions 226 to 244 are enriched in polar residues; the sequence is SPLDYSFQLTPSRTAGTSR. Low complexity predominate over residues 359–371; that stretch reads QSQSKVGYSSSSH. The Protein kinase domain maps to 448–699; it reads LDNFIKIGEG…AQELLGHPFL (252 aa). Residues 454-462 and lysine 477 contribute to the ATP site; that span reads IGEGSTGIV. The Proton acceptor role is filled by aspartate 567.

It belongs to the protein kinase superfamily. STE Ser/Thr protein kinase family. STE20 subfamily. Interacts tightly with GTP-bound but not GDP-bound CDC42/p21 and RAC1. Interacts with MARK2, leading to inhibit MARK2 independently of kinase activity. Interacts with RHOD and RHOH. Autophosphorylated when activated by CDC42/p21.

Its subcellular location is the mitochondrion. The protein resides in the cytoplasm. It is found in the nucleus. It carries out the reaction L-seryl-[protein] + ATP = O-phospho-L-seryl-[protein] + ADP + H(+). It catalyses the reaction L-threonyl-[protein] + ATP = O-phospho-L-threonyl-[protein] + ADP + H(+). Functionally, serine/threonine protein kinase that plays a role in a variety of different signaling pathways including cytoskeleton regulation, cell migration, proliferation or cell survival. Activation by various effectors including growth factor receptors or active CDC42 and RAC1 results in a conformational change and a subsequent autophosphorylation on several serine and/or threonine residues. Phosphorylates the proto-oncogene RAF and stimulates its kinase activity. Promotes cell survival by phosphorylating the BCL2 antagonist of cell death BAD. Phosphorylates CTNND1, probably to regulate cytoskeletal organization and cell morphology. Keeps microtubules stable through MARK2 inhibition and destabilizes the F-actin network leading to the disappearance of stress fibers and focal adhesions. This Rattus norvegicus (Rat) protein is Serine/threonine-protein kinase PAK 5 (Pak5).